We begin with the raw amino-acid sequence, 537 residues long: Cytochrome P450 monooxygenase ltmQ (537 aa).

The chain crosses the membrane as a helical span at residues 10–30; that stretch reads FPKLNFATIVISGATIIGIIF. N-linked (GlcNAc...) asparagine glycosylation is found at Asn-182, Asn-188, and Asn-310. A heme-binding site is contributed by Cys-476.

The protein belongs to the cytochrome P450 family. The cofactor is heme.

The protein localises to the membrane. It participates in secondary metabolite biosynthesis. In terms of biological role, cytochrome P450 monooxygenase; part of the gene clusters that mediates the biosynthesis of lolitrems, indole-diterpene mycotoxins that are potent tremorgens in mammals, and are synthesized by clavicipitaceous fungal endophytes in association with their grass hosts. The geranylgeranyl diphosphate (GGPP) synthase ltmG is proposed to catalyze the first step in lolitrem biosynthesis. LtmG catalyzes a series of iterative condensations of isopentenyl diphosphate (IPP) with dimethylallyl diphosphate (DMAPP), geranyl diphosphate (GPP), and farnesyl diphosphate (FPP), to form GGPP. GGPP then condenses with indole-3-glycerol phosphate to form 3-geranylgeranylindole, an acyclic intermediate, to be incorporated into paxilline. Either ltmG or ltmC could be responsible for this step, as both are putative prenyl transferases. The FAD-dependent monooxygenase ltmM then catalyzes the epoxidation of the two terminal alkenes of the geranylgeranyl moiety, which is subsequently cyclized by ltmB, to paspaline. The cytochrome P450 monooxygenases ltmQ and ltmP can sequentially oxidize paspaline to terpendole E and terpendole F. Alternatively, ltmP converts paspaline to an intermediate which is oxidized by ltmQ to terpendole F. LtmF, ltmK, ltmE and ltmJ appear to be unique to the epichloe endophytes. The prenyltransferase ltmF is involved in the 27-hydroxyl-O-prenylation. The cytochrome P450 monooxygenase ltmK is required for the oxidative acetal ring formation. The multi-functional prenyltransferase ltmE is required for C20- and C21-prenylations of the indole ring of paspalanes and acts together with the cytochrome P450 monooxygenase ltmJ to yield lolitremanes by multiple oxidations and ring closures. The stereoisomer pairs of lolitriol and lolitrem N or lolitrem B and lolitrem F may be attributed to variations in the way in which ring closure can occur under the action of ltmJ. While the major product of this pathway is lolitrem B, the prenyl transferases and cytochrome P450 monooxygenases identified in this pathway have a remarkable versatility in their regio- and stereo-specificities to generate a diverse range of metabolites that are products of a metabolic grid rather than a linear pathway. The sequence is that of Cytochrome P450 monooxygenase ltmQ from Epichloe festucae var. lolii (Neotyphodium lolii).